A 405-amino-acid polypeptide reads, in one-letter code: Arginine biosynthesis bifunctional protein ArgJ (405 aa).

Substrate contacts are provided by T167, K190, T201, E281, N400, and S405. The active-site Nucleophile is the T201.

It belongs to the ArgJ family. Heterotetramer of two alpha and two beta chains.

Its subcellular location is the cytoplasm. The enzyme catalyses N(2)-acetyl-L-ornithine + L-glutamate = N-acetyl-L-glutamate + L-ornithine. It carries out the reaction L-glutamate + acetyl-CoA = N-acetyl-L-glutamate + CoA + H(+). It participates in amino-acid biosynthesis; L-arginine biosynthesis; L-ornithine and N-acetyl-L-glutamate from L-glutamate and N(2)-acetyl-L-ornithine (cyclic): step 1/1. The protein operates within amino-acid biosynthesis; L-arginine biosynthesis; N(2)-acetyl-L-ornithine from L-glutamate: step 1/4. Functionally, catalyzes two activities which are involved in the cyclic version of arginine biosynthesis: the synthesis of N-acetylglutamate from glutamate and acetyl-CoA as the acetyl donor, and of ornithine by transacetylation between N(2)-acetylornithine and glutamate. This is Arginine biosynthesis bifunctional protein ArgJ from Nocardia farcinica (strain IFM 10152).